A 436-amino-acid polypeptide reads, in one-letter code: MVLPTVAIVGRPNVGKSTLFNRIAGERISIVEDVEGVTRDRIYATGEWLNRQFSLIDTGGIDDVDAPFMEQIKHQAQIAMEEADVIVFVVSGKEGVTDADEYVSKILYRTNTPVILAVNKVDNPEMRNDIYDFYSLGLGDPYPVSSVHGIGTGDVLDAIVENLPVEEAEENDDIIRFSLIGRPNVGKSSLINAILGEDRVIASPVAGTTRDAIDTHFTDADGQEFTMIDTAGMRKSGKIYENTEKYSVMRAMRAIDRSDVVLMVINAEEGIREYDKRIAGFAHEAGKGMIIVVNKWDAIDKDNHTVAKWEADIRDQFQFLTYAPIIFVSALTKQRLNKLPDLIKRISESQNKRIPSAVLNDVIMDAIAINPTPTDKGKRLKIFYATQVSVKPPTFVVFVNEEELMHFSYLRFLENQIRAAFTFEGTPIHLIARKRK.

2 EngA-type G domains span residues 4 to 167 and 175 to 351; these read PTVA…PVEE and IRFS…ESQN. Residues 10–17, 57–61, 119–122, 181–188, 229–233, and 294–297 each bind GTP; these read GRPNVGKS, DTGGI, NKVD, DTAGM, and NKWD. Positions 352–436 constitute a KH-like domain; it reads KRIPSAVLND…PIHLIARKRK (85 aa).

It belongs to the TRAFAC class TrmE-Era-EngA-EngB-Septin-like GTPase superfamily. EngA (Der) GTPase family. As to quaternary structure, associates with the 50S ribosomal subunit.

GTPase that plays an essential role in the late steps of ribosome biogenesis. The chain is GTPase Der from Streptococcus pyogenes serotype M3 (strain ATCC BAA-595 / MGAS315).